A 466-amino-acid chain; its full sequence is Hydroxyacid-oxoacid transhydrogenase, mitochondrial (466 aa).

Lysine 444 carries the post-translational modification N6-acetyllysine. The residue at position 451 (serine 451) is a Phosphoserine.

It belongs to the iron-containing alcohol dehydrogenase family. Hydroxyacid-oxoacid transhydrogenase subfamily.

Its subcellular location is the mitochondrion. The enzyme catalyses (S)-3-hydroxybutanoate + 2-oxoglutarate = (R)-2-hydroxyglutarate + acetoacetate. The catalysed reaction is 4-hydroxybutanoate + 2-oxoglutarate = (R)-2-hydroxyglutarate + succinate semialdehyde. Its function is as follows. Catalyzes the cofactor-independent reversible oxidation of gamma-hydroxybutyrate (GHB) to succinic semialdehyde (SSA) coupled to reduction of 2-ketoglutarate (2-KG) to D-2-hydroxyglutarate (D-2-HG). L-3-hydroxybutyrate (L-3-OHB) is also a substrate for HOT when using 2-KG as hydrogen acceptor, resulting in the formation of D-2-HG. The protein is Hydroxyacid-oxoacid transhydrogenase, mitochondrial (ADHFE1) of Bos taurus (Bovine).